We begin with the raw amino-acid sequence, 247 residues long: Cell division protein ZapD (247 aa).

It belongs to the ZapD family. In terms of assembly, interacts with FtsZ.

Its subcellular location is the cytoplasm. Its function is as follows. Cell division factor that enhances FtsZ-ring assembly. Directly interacts with FtsZ and promotes bundling of FtsZ protofilaments, with a reduction in FtsZ GTPase activity. This is Cell division protein ZapD from Shigella sonnei (strain Ss046).